A 622-amino-acid polypeptide reads, in one-letter code: Elongation factor 4 (622 aa).

Positions 17–201 constitute a tr-type G domain; the sequence is ALIRNFCIIA…KVVAEVPAPV (185 aa). Residues 29–34 and 148–151 each bind GTP; these read DHGKST and NKID.

This sequence belongs to the TRAFAC class translation factor GTPase superfamily. Classic translation factor GTPase family. LepA subfamily.

It is found in the cell membrane. It carries out the reaction GTP + H2O = GDP + phosphate + H(+). Its function is as follows. Required for accurate and efficient protein synthesis under certain stress conditions. May act as a fidelity factor of the translation reaction, by catalyzing a one-codon backward translocation of tRNAs on improperly translocated ribosomes. Back-translocation proceeds from a post-translocation (POST) complex to a pre-translocation (PRE) complex, thus giving elongation factor G a second chance to translocate the tRNAs correctly. Binds to ribosomes in a GTP-dependent manner. In Streptomyces avermitilis (strain ATCC 31267 / DSM 46492 / JCM 5070 / NBRC 14893 / NCIMB 12804 / NRRL 8165 / MA-4680), this protein is Elongation factor 4.